Reading from the N-terminus, the 66-residue chain is UPF0370 protein CKO_00315 (66 aa).

Residues 4–24 (LAKYWWILVLVFLVGVLINVI) traverse the membrane as a helical segment. The tract at residues 39–66 (KPELPPHRDFNDKWDDDDDWPKKDQPKK) is disordered. The segment covering 42–51 (LPPHRDFNDK) has biased composition (basic and acidic residues).

It belongs to the UPF0370 family.

The protein localises to the cell membrane. The polypeptide is UPF0370 protein CKO_00315 (Citrobacter koseri (strain ATCC BAA-895 / CDC 4225-83 / SGSC4696)).